We begin with the raw amino-acid sequence, 68 residues long: ATP synthase protein 8 (68 aa).

A helical membrane pass occupies residues 8-24 (VWPTIIMSMLLALFLLM). Lys54 carries the post-translational modification N6-acetyllysine; alternate. Lys54 bears the N6-succinyllysine; alternate mark. Lys57 carries the post-translational modification N6-acetyllysine.

The protein belongs to the ATPase protein 8 family. In terms of assembly, F-type ATPases have 2 components, CF(1) - the catalytic core - and CF(0) - the membrane proton channel. Component of an ATP synthase complex composed of ATP5PB, ATP5MC1, ATP5F1E, ATP5PD, ATP5ME, ATP5PF, ATP5MF, MT-ATP6, MT-ATP8, ATP5F1A, ATP5F1B, ATP5F1D, ATP5F1C, ATP5PO, ATP5MG, ATP5MK and ATP5MJ. Interacts with PRICKLE3.

It is found in the mitochondrion membrane. Functionally, mitochondrial membrane ATP synthase (F(1)F(0) ATP synthase or Complex V) produces ATP from ADP in the presence of a proton gradient across the membrane which is generated by electron transport complexes of the respiratory chain. F-type ATPases consist of two structural domains, F(1) - containing the extramembraneous catalytic core and F(0) - containing the membrane proton channel, linked together by a central stalk and a peripheral stalk. During catalysis, ATP synthesis in the catalytic domain of F(1) is coupled via a rotary mechanism of the central stalk subunits to proton translocation. Part of the complex F(0) domain. Minor subunit located with subunit a in the membrane. The chain is ATP synthase protein 8 (MT-ATP8) from Hylobates lar (Lar gibbon).